The primary structure comprises 507 residues: Glycogen synthase (507 aa).

Lys-15 provides a ligand contact to ADP-alpha-D-glucose.

The protein belongs to the glycosyltransferase 1 family. Bacterial/plant glycogen synthase subfamily.

The enzyme catalyses [(1-&gt;4)-alpha-D-glucosyl](n) + ADP-alpha-D-glucose = [(1-&gt;4)-alpha-D-glucosyl](n+1) + ADP + H(+). The protein operates within glycan biosynthesis; glycogen biosynthesis. In terms of biological role, synthesizes alpha-1,4-glucan chains using ADP-glucose. The protein is Glycogen synthase of Rhodopirellula baltica (strain DSM 10527 / NCIMB 13988 / SH1).